A 344-amino-acid chain; its full sequence is Phosphate acyltransferase (344 aa).

This sequence belongs to the PlsX family. Homodimer. Probably interacts with PlsY.

The protein localises to the cytoplasm. The catalysed reaction is a fatty acyl-[ACP] + phosphate = an acyl phosphate + holo-[ACP]. It participates in lipid metabolism; phospholipid metabolism. Its function is as follows. Catalyzes the reversible formation of acyl-phosphate (acyl-PO(4)) from acyl-[acyl-carrier-protein] (acyl-ACP). This enzyme utilizes acyl-ACP as fatty acyl donor, but not acyl-CoA. This chain is Phosphate acyltransferase, found in Acaryochloris marina (strain MBIC 11017).